An 891-amino-acid chain; its full sequence is MRPIDRQIYRPPDFRTTFLQTADTKDKTKLSTGAAEHTPLMKQFFAAKSDYPDLLLFFRMGDFYELFYDDARKAARLLDITLTQRGSSGGAPIPMAGVPVHAYEGYLARLVALGESVAICEQIGDPALAKGLVERKVVRIVTPGTVTDEALLDERRDTLLMAISRSKQGYGLAWADLAGGRFLVNEVDSVDALEAEIARLEPAELLVPDEDNWPEFLRGRVGVRRRPPWLFDADSGRRQLLAFFKLHDLSGFGIDDKPCATAAAGALLGYVEETQKQRLPHLTSIAMEVASEAISMNAATRRHLELDTRVDGDTRNTLLGVLDSTVTPMGGRLLRRWLHRPLRLREVLVQRHHAVGSLIDTGADTDVREAFRALGDLERILTRVALRSARPRDFSTLRDGLALLPKVRTILAPLDSPRLQTLYAELGEHDATAHLLISAVAEQPPLKFSDGGVIATGYDADLDELRRLSTNADQFLIDLEQRERASSGIATLKVGYNRVHGYYIEISKGQAEKAPLHYSRRQTLTNAERYITEELKSFEDKVLSARERSLSREKLLYEGLLDALGGELEGLKRCASALSELDVLAGFAERAQALDWSQPELESAPCLHIERGRHPVVEAVRDQPFEPNDLDLHPDRRMLVITGPNMGGKSTYMRQNALIVLLAHIGSYVPASRAVIGPIDRILTRIGAGDDLARGQSTFMVEMAETSYILHHATPQSLVLMDEIGRGTSTYDGLALADAVARHLAHTNRCYTLFATHYFELTALADASHAGGGSGIANVHLDAVEHGERLVFMHAVKDGPANRSFGLQVAALAGLPKAAVQQARRRLAELEQRGGDSHAAEMAPAALDAPQQFGLFTAPSSAAQEALQALDPDELTPKQALEALYRLKALL.

643–650 (GPNMGGKS) is a binding site for ATP.

It belongs to the DNA mismatch repair MutS family.

Its function is as follows. This protein is involved in the repair of mismatches in DNA. It is possible that it carries out the mismatch recognition step. This protein has a weak ATPase activity. The polypeptide is DNA mismatch repair protein MutS (Xanthomonas campestris pv. campestris (strain ATCC 33913 / DSM 3586 / NCPPB 528 / LMG 568 / P 25)).